The primary structure comprises 300 residues: 4-hydroxy-tetrahydrodipicolinate synthase (300 aa).

T49 lines the pyruvate pocket. Y137 (proton donor/acceptor) is an active-site residue. The active-site Schiff-base intermediate with substrate is K166. Residue I208 coordinates pyruvate.

Belongs to the DapA family. Homotetramer; dimer of dimers.

Its subcellular location is the cytoplasm. The enzyme catalyses L-aspartate 4-semialdehyde + pyruvate = (2S,4S)-4-hydroxy-2,3,4,5-tetrahydrodipicolinate + H2O + H(+). Its pathway is amino-acid biosynthesis; L-lysine biosynthesis via DAP pathway; (S)-tetrahydrodipicolinate from L-aspartate: step 3/4. Its function is as follows. Catalyzes the condensation of (S)-aspartate-beta-semialdehyde [(S)-ASA] and pyruvate to 4-hydroxy-tetrahydrodipicolinate (HTPA). In Methanopyrus kandleri (strain AV19 / DSM 6324 / JCM 9639 / NBRC 100938), this protein is 4-hydroxy-tetrahydrodipicolinate synthase.